Consider the following 120-residue polypeptide: NAD(P)H-quinone oxidoreductase subunit 3, chloroplastic (120 aa).

Transmembrane regions (helical) follow at residues 9–29, 64–84, and 88–108; these read IFWA…TISG, MFAL…PWAM, and VLGI…IVGS.

It belongs to the complex I subunit 3 family. As to quaternary structure, NDH is composed of at least 16 different subunits, 5 of which are encoded in the nucleus.

It localises to the plastid. The protein resides in the chloroplast thylakoid membrane. It catalyses the reaction a plastoquinone + NADH + (n+1) H(+)(in) = a plastoquinol + NAD(+) + n H(+)(out). The enzyme catalyses a plastoquinone + NADPH + (n+1) H(+)(in) = a plastoquinol + NADP(+) + n H(+)(out). Functionally, NDH shuttles electrons from NAD(P)H:plastoquinone, via FMN and iron-sulfur (Fe-S) centers, to quinones in the photosynthetic chain and possibly in a chloroplast respiratory chain. The immediate electron acceptor for the enzyme in this species is believed to be plastoquinone. Couples the redox reaction to proton translocation, and thus conserves the redox energy in a proton gradient. This Lotus japonicus (Lotus corniculatus var. japonicus) protein is NAD(P)H-quinone oxidoreductase subunit 3, chloroplastic.